A 1095-amino-acid chain; its full sequence is MIDEKMRSKSIGPFVRQVKPLSPHMVLFVLLYVLSISVFFLTVSEAVCNLQDRDSLLWFSGNVSSPVSPLHWNSSIDCCSWEGISCDKSPENRVTSIILSSRGLSGNLPSSVLDLQRLSRLDLSHNRLSGPLPPGFLSALDQLLVLDLSYNSFKGELPLQQSFGNGSNGIFPIQTVDLSSNLLEGEILSSSVFLQGAFNLTSFNVSNNSFTGSIPSFMCTASPQLTKLDFSYNDFSGDLSQELSRCSRLSVLRAGFNNLSGEIPKEIYNLPELEQLFLPVNRLSGKIDNGITRLTKLTLLELYSNHIEGEIPKDIGKLSKLSSLQLHVNNLMGSIPVSLANCTKLVKLNLRVNQLGGTLSAIDFSRFQSLSILDLGNNSFTGEFPSTVYSCKMMTAMRFAGNKLTGQISPQVLELESLSFFTFSDNKMTNLTGALSILQGCKKLSTLIMAKNFYDETVPSNKDFLRSDGFPSLQIFGIGACRLTGEIPAWLIKLQRVEVMDLSMNRFVGTIPGWLGTLPDLFYLDLSDNFLTGELPKELFQLRALMSQKAYDATERNYLELPVFVNPNNVTTNQQYNQLSSLPPTIYIKRNNLTGTIPVEVGQLKVLHILELLGNNFSGSIPDELSNLTNLERLDLSNNNLSGRIPWSLTGLHFLSYFNVANNTLSGPIPTGTQFDTFPKANFEGNPLLCGGVLLTSCDPTQHSTTKMGKGKVNRTLVLGLVLGLFFGVSLILVLLALLVLSKRRVNPGDSENAELEINSNGSYSEVPPGSDKDISLVLLFGNSRYEVKDLTIFELLKATDNFSQANIIGCGGFGLVYKATLDNGTKLAVKKLTGDYGMMEKEFKAEVEVLSRAKHENLVALQGYCVHDSARILIYSFMENGSLDYWLHENPEGPAQLDWPKRLNIMRGASSGLAYMHQICEPHIVHRDIKSSNILLDGNFKAYVADFGLSRLILPYRTHVTTELVGTLGYIPPEYGQAWVATLRGDVYSFGVVMLELLTGKRPMEVFRPKMSRELVAWVHTMKRDGKPEEVFDTLLRESGNEEAMLRVLDIACMCVNQNPMKRPNIQQVVDWLKNIEAEKNQNNREEPEEEEET.

The helical transmembrane segment at 23 to 43 (PHMVLFVLLYVLSISVFFLTV) threads the bilayer. 2 N-linked (GlcNAc...) asparagine glycosylation sites follow: Asn-62 and Asn-73. LRR repeat units follow at residues 91–115 (ENRV…VLDL), 116–139 (QRLS…FLSA), 141–165 (DQLL…SFGN), 170–195 (IFPI…VFLQ), 197–221 (AFNL…MCTA), 223–246 (PQLT…LSRC), 247–270 (SRLS…IYNL), 271–294 (PELE…ITRL), 295–318 (TKLT…IGKL), 320–342 (KLSS…LANC), 344–366 (KLVK…DFSR), 367–391 (FQSL…VYSC), 393–415 (MMTA…VLEL), 416–439 (ESLS…SILQ), 441–466 (CKKL…DFLR), 470–494 (FPSL…LIKL), 495–517 (QRVE…WLGT), 518–542 (LPDL…LFQL), and 566–589 (NPNN…IYIK). An N-linked (GlcNAc...) asparagine glycan is attached at Asn-165. N-linked (GlcNAc...) asparagine glycosylation is found at Asn-199, Asn-204, and Asn-207. N-linked (GlcNAc...) asparagine glycosylation is present at Asn-258. N-linked (GlcNAc...) asparagine glycosylation is present at Asn-341. Asn-377 carries an N-linked (GlcNAc...) asparagine glycan. Residue Asn-430 is glycosylated (N-linked (GlcNAc...) asparagine). Asn-569, Asn-592, Asn-616, Asn-627, Asn-640, Asn-662, and Asn-714 each carry an N-linked (GlcNAc...) asparagine glycan. 3 LRR repeats span residues 604–628 (LKVL…LSNL), 629–652 (TNLE…LTGL), and 654–677 (FLSY…QFDT). A helical transmembrane segment spans residues 721 to 741 (LVLGLFFGVSLILVLLALLVL). 2 positions are modified to phosphothreonine: Thr-792 and Thr-800. Positions 803–1074 (FSQANIIGCG…PNIQQVVDWL (272 aa)) constitute a Protein kinase domain. ATP is bound by residues 809–817 (IGCGGFGLV) and Lys-831. Residues Tyr-876 and Tyr-916 each carry the phosphotyrosine modification. The active-site Proton acceptor is the Asp-929. Tyr-971 carries the post-translational modification Phosphotyrosine.

The protein belongs to the protein kinase superfamily. Ser/Thr protein kinase family. As to quaternary structure, homo- and heterodimers with PSKR1. Interacts (via C-terminus) with AHA1 and AHA2 (via the R-domain). Autophosphorylated. In terms of tissue distribution, expressed ubiquitously, including in the shoot apical meristem and in the elongation zone of the root meristem.

It is found in the cell membrane. The catalysed reaction is L-seryl-[protein] + ATP = O-phospho-L-seryl-[protein] + ADP + H(+). It catalyses the reaction L-threonyl-[protein] + ATP = O-phospho-L-threonyl-[protein] + ADP + H(+). Its function is as follows. Tyrosine-sulfated glycopeptide receptor with a serine/threonine-protein kinase activity. Regulates, in response to tyrosine-sulfated glycopeptide binding, a signaling cascade involved in cellular proliferation and plant growth. Not involved in PSK perception. Involved in plant immunity, with antagonistic effects on bacterial and fungal resistances. Mediates activation of the plasma membrane H(+)-ATPase by PSY1. Phosphorylates AHA2 at Thr-881. The sequence is that of Tyrosine-sulfated glycopeptide receptor 1 from Arabidopsis thaliana (Mouse-ear cress).